A 224-amino-acid polypeptide reads, in one-letter code: CRP-like cAMP-activated global transcriptional regulator (224 aa).

3',5'-cyclic AMP-binding positions include 64-70, 79-82, 89-90, 134-135, 142-143, and 178-188; these read GRENLLT, GELS, RT, TN, IF, and EEIAQLVGASR. An HTH crp-type domain is found at 144-217; it reads TDVPGRVAKQ…GKSVLISDSE (74 aa). Residues 177-196 constitute a DNA-binding region (H-T-H motif); it reads QEEIAQLVGASRETVNKALA.

Homodimer.

Its function is as follows. Global transcriptional regulator that complexes with cAMP and binds to specific DNA promoter sites, causing DNA-bending, to regulate transcription. cAMP improves binding to specific DNA sequences, probably by altering protein conformation. Activates expression of whiB1. The sequence is that of CRP-like cAMP-activated global transcriptional regulator from Mycobacterium tuberculosis (strain CDC 1551 / Oshkosh).